The sequence spans 199 residues: uncharacterized protein (199 aa).

The region spanning 38 to 169 (NRRAAVLIPI…SLDIHREGIN (132 aa)) is the Nudix hydrolase domain. A Nudix box motif is present at residues 76 to 98 (GKADPDDQSLISTALREAEEEVA). Residues E92 and E96 each contribute to the Mg(2+) site.

This sequence belongs to the Nudix hydrolase family. PCD1 subfamily. Requires Mn(2+) as cofactor. Mg(2+) is required as a cofactor.

In terms of biological role, probably mediates the hydrolysis of some nucleoside diphosphate derivatives. This is an uncharacterized protein from Yersinia pseudotuberculosis serotype I (strain IP32953).